Consider the following 155-residue polypeptide: Transcriptional repressor NrdR (155 aa).

The segment at 3-34 is a zinc-finger region; the sequence is CPFCGNIDTQVKDSRPAEDHVSIRRRRFCPAC. The 91-residue stretch at 49–139 folds into the ATP-cone domain; the sequence is LVVIKSSGKR…VYKNFQAADD (91 aa).

The protein belongs to the NrdR family. Zn(2+) serves as cofactor.

In terms of biological role, negatively regulates transcription of bacterial ribonucleotide reductase nrd genes and operons by binding to NrdR-boxes. This Cereibacter sphaeroides (strain ATCC 17025 / ATH 2.4.3) (Rhodobacter sphaeroides) protein is Transcriptional repressor NrdR.